We begin with the raw amino-acid sequence, 688 residues long: Glycine--tRNA ligase beta subunit (688 aa).

The protein belongs to the class-II aminoacyl-tRNA synthetase family. In terms of assembly, tetramer of two alpha and two beta subunits.

It is found in the cytoplasm. The enzyme catalyses tRNA(Gly) + glycine + ATP = glycyl-tRNA(Gly) + AMP + diphosphate. The sequence is that of Glycine--tRNA ligase beta subunit from Chromohalobacter salexigens (strain ATCC BAA-138 / DSM 3043 / CIP 106854 / NCIMB 13768 / 1H11).